The primary structure comprises 384 residues: Surfeit locus protein 1-like (384 aa).

3 consecutive transmembrane segments (helical) span residues 55–75 (ALLW…YKFL), 302–322 (IPLD…TCFI), and 338–358 (IGVE…TKIY).

This sequence belongs to the SURF1 (TC 3.D.4.8) family.

Its subcellular location is the mitochondrion inner membrane. May be involved in the biogenesis of the COX complex. The chain is Surfeit locus protein 1-like from Arabidopsis thaliana (Mouse-ear cress).